A 220-amino-acid polypeptide reads, in one-letter code: Small ribosomal subunit protein uS3 (220 aa).

Residues 38 to 106 (IRNFINKKLQ…QVHINIVEIK (69 aa)) form the KH type-2 domain.

The protein belongs to the universal ribosomal protein uS3 family. In terms of assembly, part of the 30S ribosomal subunit. Forms a tight complex with proteins S10 and S14.

Its function is as follows. Binds the lower part of the 30S subunit head. Binds mRNA in the 70S ribosome, positioning it for translation. The chain is Small ribosomal subunit protein uS3 from Lacticaseibacillus paracasei (strain ATCC 334 / BCRC 17002 / CCUG 31169 / CIP 107868 / KCTC 3260 / NRRL B-441) (Lactobacillus paracasei).